The chain runs to 437 residues: Epsilon-sarcoglycan (437 aa).

At 1-317 the chain is on the extracellular side; that stretch reads MQLPWWWELG…LKSRDYYTDF (317 aa). N200 carries N-linked (GlcNAc...) asparagine glycosylation. Residues 318 to 338 traverse the membrane as a helical segment; it reads LVTLAVPSAVALVLFLILAYI. The Cytoplasmic segment spans residues 339-437; that stretch reads MCCRREGVEK…QQQTTGKWYS (99 aa). The interval 418 to 437 is disordered; that stretch reads QNLPHQTQIPQQQTTGKWYS.

This sequence belongs to the sarcoglycan alpha/epsilon family. In terms of processing, N-glycosylated. Post-translationally, ubiquitinated, leading to its degradation by the proteasome.

It is found in the cell membrane. It localises to the sarcolemma. The protein localises to the cytoplasm. Its subcellular location is the cytoskeleton. The protein resides in the cell projection. It is found in the dendrite. It localises to the golgi apparatus. Its function is as follows. Component of the sarcoglycan complex, a subcomplex of the dystrophin-glycoprotein complex which forms a link between the F-actin cytoskeleton and the extracellular matrix. The polypeptide is Epsilon-sarcoglycan (SGCE) (Bos taurus (Bovine)).